A 538-amino-acid polypeptide reads, in one-letter code: Protein BFR2 (538 aa).

The disordered stretch occupies residues 1-239 (MVKAKGRAKE…AKPMMAALST (239 aa)). Basic and acidic residues predominate over residues 7-23 (RAKEFQDPDEPITKDYD). Acidic residues-rich tracts occupy residues 80-105 (LEEE…PETA) and 172-222 (DSED…DEED). The stretch at 290–363 (YEAAEEAAIK…KWSRKVQSVN (74 aa)) forms a coiled coil.

It belongs to the AATF family.

The protein localises to the nucleus. Its subcellular location is the nucleolus. In Gibberella zeae (strain ATCC MYA-4620 / CBS 123657 / FGSC 9075 / NRRL 31084 / PH-1) (Wheat head blight fungus), this protein is Protein BFR2 (BFR2).